We begin with the raw amino-acid sequence, 307 residues long: Dioxygenase swnH1 (307 aa).

Fe cation is bound by residues H149, D151, and H227.

This sequence belongs to the PhyH family. In terms of assembly, homodimer. The cofactor is Fe cation.

The protein operates within mycotoxin biosynthesis. Dioxygenase; part of the gene cluster that mediates the biosynthesis of swainsonine (SW), a cytotoxic fungal alkaloid and a potential cancer therapy drug. Swainsonine production occurs via a multibranched pathway and is dispensable for fungal colonization of plants and infection of insect hosts. The first step of swainsonine biosynthesis is the production of the precursor pipecolic acid (PA) via conversion of L-lysine (Lys) to 1-piperideine-6-carboxylate (P6C) by the aminotransferase swnA, the latter being further reduced to PA by the reductase swnR. The PKS-NRPS hybrid synthetase swnK uptakes and condensates PA and malonyl-CoA with and without skipping of the ketoreductase (KR) domain in order to produce 3 intermediates, 1-oxoindolizidine, (1S)-1-hydroxyindolizin, and (1R)-1-hydroxyindolizine; with the transisomer (1S)-1-hydroxyindolizin being predominant. The terminal thioester reductase (TE) domain of swnK is involved in reduction of the thioester bond to release the intermediate aldehydes. The oxidoreductase swnN could contribute to the reduction of 1-oxoindolizidine to (1S)-1-hydroxyindolizin and (1R)-1-hydroxyindolizine, contributing to the major route of SW production. The dioxygenase swnH2 would be responsible for the oxidization of (1R)-1-hydroxyindolizine into (1R,2S)-1,2-dihydroxyindolizine and of (1S)-1-hydroxyindolizin to yield both (1R,2S)-1,2-dihydroxyindolizine and (1S,2S)-1,2-dihydroxyindolizine. The dioxygenase swnH1 then performs the conversion of the 1,2-dihydroxyindolizine epimers to SW. In Arthroderma benhamiae (strain ATCC MYA-4681 / CBS 112371) (Trichophyton mentagrophytes), this protein is Dioxygenase swnH1.